Consider the following 612-residue polypeptide: Large ribosomal subunit assembly factor BipA (612 aa).

The tr-type G domain maps to 5–200 (NDLRNIAIIA…TIIKHVPAPV (196 aa)). GTP-binding positions include 17–22 (DHGKTT) and 130–133 (NKID).

Belongs to the TRAFAC class translation factor GTPase superfamily. Classic translation factor GTPase family. BipA subfamily. In terms of assembly, monomer.

It is found in the cytoplasm. It carries out the reaction GTP + H2O = GDP + phosphate + H(+). In terms of biological role, a 50S ribosomal subunit assembly protein with GTPase activity, required for 50S subunit assembly at low temperatures, may also play a role in translation. Binds GTP and analogs. Binds the 70S ribosome between the 30S and 50S subunits, in a similar position as ribosome-bound EF-G; it contacts a number of ribosomal proteins, both rRNAs and the A-site tRNA. This Bacillus subtilis (strain 168) protein is Large ribosomal subunit assembly factor BipA.